The chain runs to 20 residues: Alkaline phosphatase (20 aa).

Positions 1–20 are disordered; it reads TDMLAVSVSSTDAIGHKYGT.

As to quaternary structure, homodimer; may be disulfide-linked. In terms of processing, the N-terminus is blocked.

It carries out the reaction a phosphate monoester + H2O = an alcohol + phosphate. Completely inhibited by thiol-reducing agents, such as DTT and 2-mercaptoethanol. Activity was also inhibited by sodium orthovanadate, sodium molybdate, N-ethylmaleimide, EDTA and zinc ion, but was not inhibited by okadaic acid. Acts against tyrosine-phosphatases. The sequence is that of Alkaline phosphatase from Prevotella intermedia.